A 442-amino-acid polypeptide reads, in one-letter code: 3-phosphoshikimate 1-carboxyvinyltransferase (442 aa).

The 3-phosphoshikimate site is built by Lys-25, Ser-26, and Arg-30. Residue Lys-25 participates in phosphoenolpyruvate binding. Phosphoenolpyruvate contacts are provided by Gly-96 and Arg-124. Residues Ser-171, Ser-172, Gln-173, Ser-203, Asp-325, and Lys-352 each contribute to the 3-phosphoshikimate site. Gln-173 serves as a coordination point for phosphoenolpyruvate. The Proton acceptor role is filled by Asp-325. The phosphoenolpyruvate site is built by Arg-356, Arg-400, and Lys-425.

It belongs to the EPSP synthase family. Monomer.

The protein resides in the cytoplasm. It catalyses the reaction 3-phosphoshikimate + phosphoenolpyruvate = 5-O-(1-carboxyvinyl)-3-phosphoshikimate + phosphate. It participates in metabolic intermediate biosynthesis; chorismate biosynthesis; chorismate from D-erythrose 4-phosphate and phosphoenolpyruvate: step 6/7. Its function is as follows. Catalyzes the transfer of the enolpyruvyl moiety of phosphoenolpyruvate (PEP) to the 5-hydroxyl of shikimate-3-phosphate (S3P) to produce enolpyruvyl shikimate-3-phosphate and inorganic phosphate. The sequence is that of 3-phosphoshikimate 1-carboxyvinyltransferase from Bordetella bronchiseptica (strain ATCC BAA-588 / NCTC 13252 / RB50) (Alcaligenes bronchisepticus).